A 278-amino-acid chain; its full sequence is Type II restriction enzyme AgeI (278 aa).

The protein belongs to the BsaWI type II restriction endonuclease family.

It carries out the reaction Endonucleolytic cleavage of DNA to give specific double-stranded fragments with terminal 5'-phosphates.. Its function is as follows. A P subtype restriction enzyme that recognizes the double-stranded sequence 5'-ACCGGT-3' and cleaves after A-1. The chain is Type II restriction enzyme AgeI (ageIR) from Thalassovita gelatinovora (Thalassobius gelatinovorus).